A 222-amino-acid polypeptide reads, in one-letter code: UPF0502 protein XCC4136 (222 aa).

This sequence belongs to the UPF0502 family.

The sequence is that of UPF0502 protein XCC4136 from Xanthomonas campestris pv. campestris (strain ATCC 33913 / DSM 3586 / NCPPB 528 / LMG 568 / P 25).